A 242-amino-acid polypeptide reads, in one-letter code: Uridylate kinase (242 aa).

11–14 (KLSG) contacts ATP. Residues 19 to 24 (GDKGVG) are involved in allosteric activation by GTP. Gly53 contacts UMP. Positions 54 and 58 each coordinate ATP. UMP-binding positions include Asp73 and 134–141 (IGSPYFST). Positions 162, 168, and 171 each coordinate ATP.

It belongs to the UMP kinase family. As to quaternary structure, homohexamer.

It localises to the cytoplasm. It carries out the reaction UMP + ATP = UDP + ADP. The protein operates within pyrimidine metabolism; CTP biosynthesis via de novo pathway; UDP from UMP (UMPK route): step 1/1. Allosterically activated by GTP. Inhibited by UTP. Its function is as follows. Catalyzes the reversible phosphorylation of UMP to UDP. This is Uridylate kinase from Streptococcus agalactiae serotype Ia (strain ATCC 27591 / A909 / CDC SS700).